Here is a 464-residue protein sequence, read N- to C-terminus: GDNF family receptor alpha-2 (464 aa).

Residues 1-21 (MILANVFCLFFFLDETLRSLA) form the signal peptide. Disulfide bonds link Cys40/Cys93, Cys95/Cys105, Cys161/Cys222, Cys168/Cys174, Cys185/Cys200, Cys195/Cys241, Cys224/Cys229, Cys251/Cys323, Cys258/Cys264, Cys275/Cys293, and Cys285/Cys347. Asn52 carries N-linked (GlcNAc...) asparagine glycosylation. The N-linked (GlcNAc...) asparagine glycan is linked to Asn357. The segment at 363-392 (VSPKGPSFQATQAPRVEKTPSLPDDLSDST) is disordered. Positions 381-392 (TPSLPDDLSDST) are enriched in low complexity. N-linked (GlcNAc...) asparagine glycosylation is present at Asn413. Ser444 is lipidated: GPI-anchor amidated serine. Positions 445 to 464 (RARPSAALTVLSVLMLKLAL) are cleaved as a propeptide — removed in mature form.

This sequence belongs to the GDNFR family. In terms of assembly, interacts with NRTN ligand and RET: forms a 2:2:2 ternary complex composed of NRTN ligand, GFRA2 and RET receptor. Also forms a 4:4:4 tetrameric complex composed of 4 copies of NRTN ligand, GFRA2 and RET receptor, which prevents endocytosis of RET. Interacts with SORL1. Found in both brain and placenta.

The protein resides in the cell membrane. In terms of biological role, receptor for neurturin (NRTN), a growth factor that supports the survival of sympathetic neurons. NRTN-binding leads to autophosphorylation and activation of the RET receptor. Also able to mediate GDNF signaling through the RET tyrosine kinase receptor. Functionally, participates in NRTN-induced 'Ser-727' phosphorylation of STAT3. The chain is GDNF family receptor alpha-2 (GFRA2) from Homo sapiens (Human).